Reading from the N-terminus, the 467-residue chain is MAP kinase-interacting serine/threonine-protein kinase 2 (467 aa).

Residues Gln-83–Val-367 enclose the Protein kinase domain. ATP contacts are provided by residues Leu-89–Val-97 and Lys-112. Residue Asp-204 is the Proton acceptor of the active site. Positions 298, 310, and 313 each coordinate Zn(2+). A disordered region spans residues Met-432–Asp-467.

This sequence belongs to the protein kinase superfamily. CAMK Ser/Thr protein kinase family. Requires Mg(2+) as cofactor. Zn(2+) serves as cofactor.

It carries out the reaction L-seryl-[protein] + ATP = O-phospho-L-seryl-[protein] + ADP + H(+). The enzyme catalyses L-threonyl-[protein] + ATP = O-phospho-L-threonyl-[protein] + ADP + H(+). May play a role in the response to environmental stress and cytokines. Appears to regulate translation by phosphorylating EIF4E, thus increasing the affinity of this protein for the 7-methylguanosine-containing mRNA cap. The protein is MAP kinase-interacting serine/threonine-protein kinase 2 (mknk2) of Xenopus laevis (African clawed frog).